A 318-amino-acid polypeptide reads, in one-letter code: Ribonuclease Z (318 aa).

Zn(2+) is bound by residues histidine 62, histidine 64, aspartate 66, histidine 67, histidine 144, aspartate 215, and histidine 273. Residue aspartate 66 is the Proton acceptor of the active site.

Belongs to the RNase Z family. In terms of assembly, homodimer. The cofactor is Zn(2+).

The catalysed reaction is Endonucleolytic cleavage of RNA, removing extra 3' nucleotides from tRNA precursor, generating 3' termini of tRNAs. A 3'-hydroxy group is left at the tRNA terminus and a 5'-phosphoryl group is left at the trailer molecule.. Its function is as follows. Zinc phosphodiesterase, which displays some tRNA 3'-processing endonuclease activity. Probably involved in tRNA maturation, by removing a 3'-trailer from precursor tRNA. The polypeptide is Ribonuclease Z (Prochlorococcus marinus (strain MIT 9303)).